A 535-amino-acid chain; its full sequence is Arylsulfatase K (535 aa).

Residues 1–21 (MGSGGPLLLLRGLLLVGAAYC) form the signal peptide. Ca(2+) is bound by residues aspartate 41 and cysteine 81. Catalysis depends on cysteine 81, which acts as the Nucleophile. Cysteine 81 carries the post-translational modification 3-oxoalanine (Cys). Lysine 129 is a binding site for substrate. The N-linked (GlcNAc...) asparagine glycan is linked to asparagine 194. Histidine 252 provides a ligand contact to substrate. Asparagine 263 carries N-linked (GlcNAc...) asparagine glycosylation. Residues aspartate 314 and histidine 315 each coordinate Ca(2+). N-linked (GlcNAc...) asparagine glycans are attached at residues asparagine 376, asparagine 414, and asparagine 499.

The protein belongs to the sulfatase family. It depends on Ca(2+) as a cofactor. Post-translationally, the conversion to 3-oxoalanine (also known as C-formylglycine, FGly), of a serine or cysteine residue in prokaryotes and of a cysteine residue in eukaryotes, is critical for catalytic activity.

It localises to the secreted. It is found in the lysosome. It catalyses the reaction an aryl sulfate + H2O = a phenol + sulfate + H(+). The catalysed reaction is Hydrolysis of the 2-sulfate groups of the 2-O-sulfo-D-glucuronate residues of chondroitin sulfate, heparin and heparitin sulfate.. In terms of biological role, catalyzes the hydrolysis of pseudosubstrates such as p-nitrocatechol sulfate and p-nitrophenyl sulfate. Catalyzes the hydrolysis of the 2-sulfate groups of the 2-O-sulfo-D-glucuronate residues of chondroitin sulfate, heparin and heparitin sulfate. Acts selectively on 2-sulfoglucuronate and lacks activity against 2-sulfoiduronate. This chain is Arylsulfatase K (ARSK), found in Gallus gallus (Chicken).